We begin with the raw amino-acid sequence, 164 residues long: Endoribonuclease YbeY (164 aa).

3 residues coordinate Zn(2+): His-117, His-121, and His-127.

It belongs to the endoribonuclease YbeY family. Requires Zn(2+) as cofactor.

It is found in the cytoplasm. Its function is as follows. Single strand-specific metallo-endoribonuclease involved in late-stage 70S ribosome quality control and in maturation of the 3' terminus of the 16S rRNA. The sequence is that of Endoribonuclease YbeY from Mycoplasma capricolum subsp. capricolum (strain California kid / ATCC 27343 / NCTC 10154).